The following is a 1383-amino-acid chain: DNA-directed RNA polymerase subunit beta (1383 aa).

The protein belongs to the RNA polymerase beta chain family. The RNAP catalytic core consists of 2 alpha, 1 beta, 1 beta' and 1 omega subunit. When a sigma factor is associated with the core the holoenzyme is formed, which can initiate transcription.

The enzyme catalyses RNA(n) + a ribonucleoside 5'-triphosphate = RNA(n+1) + diphosphate. In terms of biological role, DNA-dependent RNA polymerase catalyzes the transcription of DNA into RNA using the four ribonucleoside triphosphates as substrates. This is DNA-directed RNA polymerase subunit beta from Bartonella quintana (strain Toulouse) (Rochalimaea quintana).